The chain runs to 140 residues: Nucleoside diphosphate kinase (140 aa).

6 residues coordinate ATP: lysine 11, phenylalanine 59, arginine 87, threonine 93, arginine 104, and asparagine 114. Residue histidine 117 is the Pros-phosphohistidine intermediate of the active site.

The protein belongs to the NDK family. As to quaternary structure, homotetramer. The cofactor is Mg(2+).

It is found in the cytoplasm. The catalysed reaction is a 2'-deoxyribonucleoside 5'-diphosphate + ATP = a 2'-deoxyribonucleoside 5'-triphosphate + ADP. It catalyses the reaction a ribonucleoside 5'-diphosphate + ATP = a ribonucleoside 5'-triphosphate + ADP. Functionally, major role in the synthesis of nucleoside triphosphates other than ATP. The ATP gamma phosphate is transferred to the NDP beta phosphate via a ping-pong mechanism, using a phosphorylated active-site intermediate. The polypeptide is Nucleoside diphosphate kinase (Beijerinckia indica subsp. indica (strain ATCC 9039 / DSM 1715 / NCIMB 8712)).